Reading from the N-terminus, the 277-residue chain is Phosphoenolpyruvate synthase regulatory protein (277 aa).

157–164 provides a ligand contact to ADP; sequence GVSRCGKT.

It belongs to the pyruvate, phosphate/water dikinase regulatory protein family. PSRP subfamily.

The catalysed reaction is [pyruvate, water dikinase] + ADP = [pyruvate, water dikinase]-phosphate + AMP + H(+). It carries out the reaction [pyruvate, water dikinase]-phosphate + phosphate + H(+) = [pyruvate, water dikinase] + diphosphate. In terms of biological role, bifunctional serine/threonine kinase and phosphorylase involved in the regulation of the phosphoenolpyruvate synthase (PEPS) by catalyzing its phosphorylation/dephosphorylation. The protein is Phosphoenolpyruvate synthase regulatory protein of Salmonella agona (strain SL483).